The sequence spans 29 residues: Galanin (29 aa).

Ala29 bears the Alanine amide mark.

This sequence belongs to the galanin family.

Its subcellular location is the secreted. In terms of biological role, contracts smooth muscle of the gastrointestinal and genitourinary tract, regulates growth hormone release, modulates insulin release, and may be involved in the control of adrenal secretion. The protein is Galanin (GAL) of Ovis aries (Sheep).